Consider the following 48-residue polypeptide: Large ribosomal subunit protein bL32 (48 aa).

The disordered stretch occupies residues 28-48 (VKDKDGSWKMPHRINKTTGEY).

The protein belongs to the bacterial ribosomal protein bL32 family.

The protein is Large ribosomal subunit protein bL32 of Campylobacter concisus (strain 13826).